We begin with the raw amino-acid sequence, 297 residues long: Small ribosomal subunit protein uS9m (297 aa).

The tract at residues V278–R297 is disordered.

It belongs to the universal ribosomal protein uS9 family.

It localises to the mitochondrion. The protein is Small ribosomal subunit protein uS9m (MRPS9) of Kluyveromyces lactis (strain ATCC 8585 / CBS 2359 / DSM 70799 / NBRC 1267 / NRRL Y-1140 / WM37) (Yeast).